We begin with the raw amino-acid sequence, 257 residues long: Transmembrane protein 101 (257 aa).

The next 8 membrane-spanning stretches (helical) occupy residues 21 to 40 (VLLT…LYAE), 52 to 72 (VPYL…MSFG), 77 to 97 (WFAL…YIGG), 110 to 130 (YSRT…AGEL), 139 to 159 (SLQS…AYSL), 182 to 202 (LFFV…YVTL), 206 to 226 (ILAV…AYWH), and 233 to 253 (FWNQ…AVIL).

It localises to the membrane. Its function is as follows. May activate NF-kappa-B signaling pathways. This Homo sapiens (Human) protein is Transmembrane protein 101 (TMEM101).